A 538-amino-acid chain; its full sequence is Coiled-coil domain-containing protein 8 (538 aa).

The disordered stretch occupies residues 58 to 128 (IMEKSTPHPP…QGPRRGKKVR (71 aa)). Basic residues predominate over residues 119 to 128 (QGPRRGKKVR). Phosphoserine occurs at positions 142, 146, and 261. Positions 213-473 (WAPRAGPGVG…GTAPGARARK (261 aa)) are disordered. Basic and acidic residues predominate over residues 301–313 (DSQREEAIADQRE). The span at 321 to 332 (AGAPADQGAEAA) shows a compositional bias: low complexity. A coiled-coil region spans residues 349-366 (AEEGAEAADNQREEAADN). Basic and acidic residues-rich tracts occupy residues 357–373 (DNQR…EAPA), 381–392 (DNHREEAADNQR), and 405–419 (DNQR…RERA). Composition is skewed to low complexity over residues 428 to 438 (QRAQARAGQRA) and 458 to 469 (AAQGTTGTAPGA). A PxLPxI/L motif; mediates interaction with ANKRA2 motif is present at residues 500 to 506 (PRLPTLP). A coiled-coil region spans residues 514 to 535 (EARNLRVLRAEARAEAEQGEQE).

In terms of assembly, component of the 3M complex, composed of core components CUL7, CCDC8 and OBSL1. Interacts (via PxLPxI/L motif) with ANKRA2 (via ankyrin repeats); may link the 3M complex to histone deacetylases including HDAC4 and HDAC5. As to expression, widely expressed with low levels in spleen, skeletal muscle, small intestine, kidney and liver.

It localises to the cytoplasm. The protein resides in the cytoskeleton. Its subcellular location is the microtubule organizing center. The protein localises to the centrosome. Its function is as follows. Core component of the 3M complex, a complex required to regulate microtubule dynamics and genome integrity. It is unclear how the 3M complex regulates microtubules, it could act by controlling the level of a microtubule stabilizer. Required for localization of CUL7 to the centrosome. The sequence is that of Coiled-coil domain-containing protein 8 (CCDC8) from Homo sapiens (Human).